Reading from the N-terminus, the 198-residue chain is Probable GTP-binding protein EngB (198 aa).

An EngB-type G domain is found at 21–195 (NIPEVCFVGR…YDALIRLLEV (175 aa)). Residues 29–36 (GRSNVGKS), 56–60 (GKTRL), 75–78 (DAPG), 142–145 (TKLD), and 174–176 (VSN) contribute to the GTP site. Mg(2+)-binding residues include S36 and T58.

It belongs to the TRAFAC class TrmE-Era-EngA-EngB-Septin-like GTPase superfamily. EngB GTPase family. It depends on Mg(2+) as a cofactor.

Necessary for normal cell division and for the maintenance of normal septation. The polypeptide is Probable GTP-binding protein EngB (Mesoplasma florum (strain ATCC 33453 / NBRC 100688 / NCTC 11704 / L1) (Acholeplasma florum)).